The primary structure comprises 278 residues: 3-methyl-2-oxobutanoate hydroxymethyltransferase (278 aa).

Mg(2+) contacts are provided by Asp-43 and Asp-82. 3-methyl-2-oxobutanoate-binding positions include 43-44 (DS), Asp-82, and Lys-112. Mg(2+) is bound at residue Glu-114. The active-site Proton acceptor is Glu-181.

Belongs to the PanB family. Homodecamer; pentamer of dimers. The cofactor is Mg(2+).

The protein resides in the cytoplasm. It carries out the reaction 3-methyl-2-oxobutanoate + (6R)-5,10-methylene-5,6,7,8-tetrahydrofolate + H2O = 2-dehydropantoate + (6S)-5,6,7,8-tetrahydrofolate. It functions in the pathway cofactor biosynthesis; (R)-pantothenate biosynthesis; (R)-pantoate from 3-methyl-2-oxobutanoate: step 1/2. Catalyzes the reversible reaction in which hydroxymethyl group from 5,10-methylenetetrahydrofolate is transferred onto alpha-ketoisovalerate to form ketopantoate. This Desulfitobacterium hafniense (strain Y51) protein is 3-methyl-2-oxobutanoate hydroxymethyltransferase.